Consider the following 950-residue polypeptide: MTWRMGPRFTMLLAMWLVCGSEPHPHATIRGSHGGRKVPLVSPDSSRPARFLRHTGRSRGIERSTLEEPNLQPLQRRRSVPVLRLARPTEPPARSDINGAAVRPEQRPAARGSPREMIRDEGSSARSRMLRFPSGSSSPNILASFAGKNRVWVISAPHASEGYYRLMMSLLKDDVYCELAERHIQQIVLFHQAGEEGGKVRRITSEGQILEQPLDPSLIPKLMSFLKLEKGKFGMVLLKKTLQVEERYPYPVRLEAMYEVIDQGPIRRIEKIRQKGFVQKCKASGVEGQVVAEGNDGGGGAGRPSLGSEKKKEDPRRAQVPPTRESRVKVLRKLAATAPALPQPPSTPRATTLPPAPATTVTRSTSRAVTVAARPMTTTAFPTTQRPWTPSPSHRPPTTTEVITARRPSVSENLYPPSRKDQHRERPQTTRRPSKATSLESFTNAPPTTISEPSTRAAGPGRFRDNRMDRREHGHRDPNVVPGPPKPAKEKPPKKKAQDKILSNEYEEKYDLSRPTASQLEDELQVGNVPLKKAKESKKHEKLEKPEKEKKKKMKNENADKLLKSEKQMKKSEKKSKQEKEKSKKKKGGKTEQDGYQKPTNKHFTQSPKKSVADLLGSFEGKRRLLLITAPKAENNMYVQQRDEYLESFCKMATRKISVITIFGPVNNSTMKIDHFQLDNEKPMRVVDDEDLVDQRLISELRKEYGMTYNDFFMVLTDVDLRVKQYYEVPITMKSVFDLIDTFQSRIKDMEKQKKEGIVCKEDKKQSLENFLSRFRWRRRLLVISAPNDEDWAYSQQLSALSGQACNFGLRHITILKLLGVGEEVGGVLELFPINGSSVVEREDVPAHLVKDIRNYFQVSPEYFSMLLVGKDGNVKSWYPSPMWSMVIVYDLIDSMQLRRQEMAIQQSLGMRCPEDEYAGYGYHSYHQGYQDGYQDDYRHHESYHHGYPY.

The first 21 residues, 1-21 (MTWRMGPRFTMLLAMWLVCGS), serve as a signal peptide directing secretion. 3 disordered regions span residues 28 to 64 (TIRGSHGGRKVPLVSPDSSRPARFLRHTGRSRGIERS), 88 to 119 (PTEPPARSDINGAAVRPEQRPAARGSPREMIR), and 289 to 609 (QVVA…QSPK). Basic and acidic residues-rich tracts occupy residues 104–119 (PEQRPAARGSPREMIR) and 308–317 (SEKKKEDPRR). Residues 348-374 (PRATTLPPAPATTVTRSTSRAVTVAAR) are compositionally biased toward low complexity. The segment covering 376–385 (MTTTAFPTTQ) has biased composition (polar residues). The span at 418 to 428 (SRKDQHRERPQ) shows a compositional bias: basic and acidic residues. Over residues 435–454 (KATSLESFTNAPPTTISEPS) the composition is skewed to polar residues. Composition is skewed to basic and acidic residues over residues 462-478 (RFRDNRMDRREHGHRDP), 487-499 (PAKEKPPKKKAQD), and 538-582 (KKHE…EKEK). Glycyl lysine isopeptide (Lys-Gly) (interchain with G-Cter in SUMO2) cross-links involve residues lysine 545 and lysine 548. The stretch at 560–587 (DKLLKSEKQMKKSEKKSKQEKEKSKKKK) forms a coiled coil. The segment covering 598-609 (KPTNKHFTQSPK) has biased composition (polar residues).

It belongs to the CCDC80 family. Binds to various extracellular matrix proteins. In terms of processing, phosphorylated. Expressed in dermal papilla and dermal fibroblasts (at protein level). Expressed in heart, thymus, placenta, pancreas, colon, epithelium, spleen and osteoblasts.

Its subcellular location is the secreted. The protein localises to the extracellular space. It localises to the extracellular matrix. In terms of biological role, promotes cell adhesion and matrix assembly. In Homo sapiens (Human), this protein is Coiled-coil domain-containing protein 80 (CCDC80).